The chain runs to 428 residues: Divergent protein kinase domain 1A (428 aa).

At 1 to 27 (MARSLCAGAWLRKPHYLQARLSYMRVK) the chain is on the cytoplasmic side. Residues 28–48 (YLFFSWLVVFVGSWIIYVQYS) form a helical membrane-spanning segment. The Lumenal segment spans residues 49-428 (TYTELCRGKD…WKKISYTNDS (380 aa)).

It belongs to the DIPK family. In terms of processing, among the many cysteines in the lumenal domain, most are probably involved in disulfide bonds. Ubiquitous.

Its subcellular location is the endoplasmic reticulum membrane. In Mus musculus (Mouse), this protein is Divergent protein kinase domain 1A (Dipk1a).